The primary structure comprises 122 residues: MTEEADFSEQITDGKNKSNVRCQFCNCLMLKAQEGTYNQEEVDVPLMTQKQDRTADSLNSEPLKDFWLVKDMMTFENIGFSNTVDGRKFLVCADCERGPVGYHDLSTRHCYLALKRVVHKDT.

One can recognise an MSS4 domain in the interval 9–120; the sequence is EQITDGKNKS…YLALKRVVHK (112 aa). The Zn(2+) site is built by Cys-22, Cys-25, Cys-92, and Cys-95.

It belongs to the DSS4/MSS4 family. In terms of assembly, interacts with Rab8.

Its subcellular location is the basal cell membrane. In terms of biological role, guanine-nucleotide-releasing protein that acts on members of the sec4/ypt1/rab subfamily such as Rab8. During egg development, essential for establishing and maintaining epithelial cell polarity by regulating the correct polarized deposition of basal membrane (BM) proteins such as trol/Pcan and vkg/Coll IV to the basal surface of follicular epithelial (FE) cells. Likely to function by restricting the activity of the vesicle transport regulator Rab8 to the basal membrane, and thus directs BM protein-containing vesicles to the basal side of the FE cells. This function is independent of the Crag/Rab10 regulation of polarized BM protein secretion in the FE. This chain is Guanine nucleotide exchange factor MSS4 homolog, found in Drosophila melanogaster (Fruit fly).